The primary structure comprises 750 residues: Circadian input-output histidine kinase CikA (750 aa).

Residues 1 to 173 (MLPAFSPIFR…QVIAQIRQSL (173 aa)) are N-terminal domain. Residues 174–333 (DLSEILNNAV…KNFLGQIGEH (160 aa)) are GAF domain. In terms of domain architecture, Histidine kinase spans 385–609 (NISHELRTPL…IFTTVIPQQN (225 aa)). Residue His388 is modified to Phosphohistidine; by autocatalysis. The segment at 604–750 (VIPQQNFPPT…VQSIQQEPLR (147 aa)) is psR domain, bind KaiB(fs). In terms of domain architecture, Response regulatory spans 631 to 745 (SVIVIEQDEE…LLLQRVQSIQ (115 aa)). At Asp680 the chain carries 4-aspartylphosphate.

It in the N-terminal section; belongs to the phytochrome family. Homodimer. Part of the circadian clock (KaiA, KaiB, KaiC, CikA, RpaA, SasA), the composition of which varies during the circadian cycle. KaiA and CikA compete for binding to KaiB(fs). Interacts with RpaA.

It catalyses the reaction ATP + protein L-histidine = ADP + protein N-phospho-L-histidine.. Its function is as follows. Functions in an input pathway to the Kai circadian clock. Senses oxidized quinones via its C-terminal pseudo-receiver domain, providing a link between cell metabolism and the clock. Affects the ratio of phosphorylated to unphosphorylated KaiC, binds quinones via its pseudo-receptor domain. Quinone-binding destabilizes the protein rapidly. Autophosphorylates, does not transfer the phosphate to its pseudo-receiver (PsR) domain. May play a role in cell division. Functionally, also functions in a two-component CikA/RpaA output pathway from the circadian clock, negatively regulating kaiBC expression independently of labA and of sasA. One of three clock output pathways. Dephosphorylates phospho-RpaA, enhanced by KaiB and KaiC, has only modest kinase activity on RpaA. The protein is Circadian input-output histidine kinase CikA of Synechocystis sp. (strain ATCC 27184 / PCC 6803 / Kazusa).